A 257-amino-acid chain; its full sequence is V-type proton ATPase subunit D (257 aa).

The segment at 215 to 257 is disordered; sequence KEQEAAQKALEGPGPGEDAAHSENNPPRNLLASEEDNLPVLFN.

The protein belongs to the V-ATPase D subunit family. In terms of assembly, V-ATPase is a heteromultimeric enzyme made up of two complexes: the ATP-hydrolytic V1 complex and the proton translocation V0 complex. The V1 complex consists of three catalytic AB heterodimers that form a heterohexamer, three peripheral stalks each consisting of EG heterodimers, one central rotor including subunits D and F, and the regulatory subunits C and H. The proton translocation complex V0 consists of the proton transport subunit a, a ring of proteolipid subunits c9c'', rotary subunit d, subunits e and f, and the accessory subunits vah-19/Ac45 and vah-20/PRR.

Subunit of the V1 complex of vacuolar(H+)-ATPase (V-ATPase), a multisubunit enzyme composed of a peripheral complex (V1) that hydrolyzes ATP and a membrane integral complex (V0) that translocates protons. V-ATPase is responsible for acidifying and maintaining the pH of intracellular compartments and in some cell types, is targeted to the plasma membrane, where it is responsible for acidifying the extracellular environment. The sequence is that of V-type proton ATPase subunit D from Caenorhabditis elegans.